Consider the following 209-residue polypeptide: NAD(P)H dehydrogenase (quinone) (209 aa).

The Flavodoxin-like domain occupies 4–199; sequence VNIIFYSMYG…AMARYQGRHV (196 aa). FMN is bound by residues 10-15 and 87-89; these read SMYGHV and TRY. Tyrosine 12 contributes to the NAD(+) binding site. Tryptophan 107 serves as a coordination point for substrate. FMN is bound by residues 122–128 and histidine 143; that span reads SSGTQHG.

The protein belongs to the WrbA family. FMN serves as cofactor.

It carries out the reaction a quinone + NADH + H(+) = a quinol + NAD(+). The catalysed reaction is a quinone + NADPH + H(+) = a quinol + NADP(+). The protein is NAD(P)H dehydrogenase (quinone) of Methanosarcina acetivorans (strain ATCC 35395 / DSM 2834 / JCM 12185 / C2A).